The following is a 118-amino-acid chain: Holo-[acyl-carrier-protein] synthase (118 aa).

Mg(2+)-binding residues include aspartate 8 and glutamate 58.

It belongs to the P-Pant transferase superfamily. AcpS family. Requires Mg(2+) as cofactor.

The protein resides in the cytoplasm. It catalyses the reaction apo-[ACP] + CoA = holo-[ACP] + adenosine 3',5'-bisphosphate + H(+). In terms of biological role, transfers the 4'-phosphopantetheine moiety from coenzyme A to a Ser of acyl-carrier-protein. This chain is Holo-[acyl-carrier-protein] synthase, found in Listeria monocytogenes serotype 4b (strain CLIP80459).